The primary structure comprises 213 residues: Neuroligin-4, X-linked (213 aa).

Residues 1 to 56 are disordered; it reads FQYVSTTTKVPPPDMTSFPYGTRRSPAKIWPTTKRPAITPANNPKHSKDPHKTGPE. Over 1–73 the chain is Extracellular; sequence FQYVSTTTKV…TKRDYSTELS (73 aa). The segment covering 46-55 has biased composition (basic and acidic residues); sequence HSKDPHKTGP. A helical membrane pass occupies residues 74–94; the sequence is VTIAVGASLLFLNILAFAALY. The Cytoplasmic portion of the chain corresponds to 95-213; that stretch reads YKKDKRRHET…LPHGHSTTRV (119 aa). Serine 109 bears the Phosphoserine mark.

Belongs to the type-B carboxylesterase/lipase family. In terms of assembly, homodimer. Interacts with NRXN1 in a calcium-dependent manner. Interaction with neurexins is mediated by heparan sulfate glycan modification on neurexin. Interacts through its C-terminus with DLG4/PSD-95 third PDZ domain.

The protein localises to the cell membrane. The protein resides in the postsynaptic density membrane. Cell surface protein involved in cell-cell-interactions via its interactions with neurexin family members. The polypeptide is Neuroligin-4, X-linked (NLGN4X) (Macaca mulatta (Rhesus macaque)).